Reading from the N-terminus, the 197-residue chain is Ribosome maturation factor RimP (197 aa).

It belongs to the RimP family.

The protein resides in the cytoplasm. In terms of biological role, required for maturation of 30S ribosomal subunits. This Acidovorax sp. (strain JS42) protein is Ribosome maturation factor RimP.